The sequence spans 500 residues: MQDQYILALDQGTTSSRAMLFDRQGNIVSIAQKEFEQIYPQPGWVEHDPQEIWSTQAGVAAEAVTRTGLNGTSIAAIGITNQRETTIVWDRETGQPVYNAIVWQDRRTADFCDSLKKQGLEAKVRAKTGLPIDSYFSATKIRWILDNVPGARDKARQGKLAFGTVDSWLVWNFTKHELHVTDVTNASRTMLFNIHTREWDSELLELLDIPRSMLPDVKASSEIYGHTKTTVFASKIPLAGIAGDQHAALFGQMCTTSGMVKNTYGTGCFLMMNTGDKPIESKNNLVTTIAWQIGDDVQYALEGSIFIAGAVVQWLRDGVGIIKTAAEIEALAASVPHTDGVYLVPAFAGLGAPHWNARARGSVFGVTRGTTSAHLARAALDAIAYQSLDVLAAMEADSGISIGELRVDGGASANDLLMQFQADLLGVDAVRPQITETTALGAAYLAGLAIGYWKNLDEVRSQWQLDRRFAPSMPKEQVEQRMAGWQRAVRAAKAWADDTQ.

Position 13 (Thr-13) interacts with ADP. The ATP site is built by Thr-13, Thr-14, and Ser-15. Thr-13 contacts sn-glycerol 3-phosphate. Arg-17 serves as a coordination point for ADP. Residues Arg-83, Glu-84, Tyr-135, and Asp-244 each contribute to the sn-glycerol 3-phosphate site. 5 residues coordinate glycerol: Arg-83, Glu-84, Tyr-135, Asp-244, and Gln-245. Positions 266 and 309 each coordinate ADP. The ATP site is built by Thr-266, Gly-309, Gln-313, and Gly-410. ADP-binding residues include Gly-410 and Asn-414.

This sequence belongs to the FGGY kinase family.

It carries out the reaction glycerol + ATP = sn-glycerol 3-phosphate + ADP + H(+). The protein operates within polyol metabolism; glycerol degradation via glycerol kinase pathway; sn-glycerol 3-phosphate from glycerol: step 1/1. Its activity is regulated as follows. Inhibited by fructose 1,6-bisphosphate (FBP). Functionally, key enzyme in the regulation of glycerol uptake and metabolism. Catalyzes the phosphorylation of glycerol to yield sn-glycerol 3-phosphate. In Burkholderia ambifaria (strain ATCC BAA-244 / DSM 16087 / CCUG 44356 / LMG 19182 / AMMD) (Burkholderia cepacia (strain AMMD)), this protein is Glycerol kinase.